Reading from the N-terminus, the 186-residue chain is Probable RNA 2'-phosphotransferase (186 aa).

It belongs to the KptA/TPT1 family.

Removes the 2'-phosphate from RNA via an intermediate in which the phosphate is ADP-ribosylated by NAD followed by a presumed transesterification to release the RNA and generate ADP-ribose 1''-2''-cyclic phosphate (APPR&gt;P). May function as an ADP-ribosylase. This chain is Probable RNA 2'-phosphotransferase, found in Hahella chejuensis (strain KCTC 2396).